The primary structure comprises 532 residues: Glucose-6-phosphate isomerase (532 aa).

The active-site Proton donor is E322. Residues H351 and K457 contribute to the active site.

Belongs to the GPI family.

Its subcellular location is the cytoplasm. The enzyme catalyses alpha-D-glucose 6-phosphate = beta-D-fructose 6-phosphate. Its pathway is carbohydrate biosynthesis; gluconeogenesis. The protein operates within carbohydrate degradation; glycolysis; D-glyceraldehyde 3-phosphate and glycerone phosphate from D-glucose: step 2/4. Catalyzes the reversible isomerization of glucose-6-phosphate to fructose-6-phosphate. In Synechococcus sp. (strain JA-2-3B'a(2-13)) (Cyanobacteria bacterium Yellowstone B-Prime), this protein is Glucose-6-phosphate isomerase.